A 418-amino-acid chain; its full sequence is Gamma-glutamyl phosphate reductase (418 aa).

This sequence belongs to the gamma-glutamyl phosphate reductase family.

The protein resides in the cytoplasm. It carries out the reaction L-glutamate 5-semialdehyde + phosphate + NADP(+) = L-glutamyl 5-phosphate + NADPH + H(+). Its pathway is amino-acid biosynthesis; L-proline biosynthesis; L-glutamate 5-semialdehyde from L-glutamate: step 2/2. Catalyzes the NADPH-dependent reduction of L-glutamate 5-phosphate into L-glutamate 5-semialdehyde and phosphate. The product spontaneously undergoes cyclization to form 1-pyrroline-5-carboxylate. The protein is Gamma-glutamyl phosphate reductase of Clostridium acetobutylicum (strain ATCC 824 / DSM 792 / JCM 1419 / IAM 19013 / LMG 5710 / NBRC 13948 / NRRL B-527 / VKM B-1787 / 2291 / W).